Here is a 571-residue protein sequence, read N- to C-terminus: Zinc metalloproteinase-disintegrin-like jararhagin (571 aa).

Residues 1–150 (ATRPKGAVQP…KKASQLAFTA (150 aa)) constitute a propeptide that is removed on maturation. The residue at position 151 (Glu151) is a Pyrrolidone carboxylic acid (Glu). Residues 159–355 (KYIEFFVVVD…HNPECIINEP (197 aa)) form the Peptidase M12B domain. Glu162 and Asp246 together coordinate Ca(2+). 3 disulfide bridges follow: Cys270–Cys350, Cys310–Cys334, and Cys312–Cys317. His295 is a Zn(2+) binding site. Residue Glu296 is part of the active site. Positions 299 and 305 each coordinate Zn(2+). A glycan (N-linked (GlcNAc...) asparagine) is linked at Asn333. Positions 350, 353, 365, 368, 370, 372, 375, and 378 each coordinate Ca(2+). Residues 363 to 449 (PPVCGNELLE…ECPADVFHKN (87 aa)) enclose the Disintegrin domain. 22 cysteine pairs are disulfide-bonded: Cys366–Cys385, Cys366–Cys395, Cys377–Cys390, Cys377–Cys395, Cys379–Cys385, Cys389–Cys412, Cys403–Cys409, Cys408–Cys434, Cys421–Cys441, Cys428–Cys453, Cys428–Cys460, Cys453–Cys465, Cys460–Cys465, Cys472–Cys487, Cys472–Cys522, Cys487–Cys533, Cys500–Cys510, Cys510–Cys517, Cys517–Cys559, Cys522–Cys533, Cys553–Cys564, and Cys559–Cys564. Residues 427 to 429 (ECD) carry the D/ECD-tripeptide motif. Ca(2+) contacts are provided by Asp429, Pro430, Glu432, Asp444, and Val445.

The protein belongs to the venom metalloproteinase (M12B) family. P-III subfamily. P-IIIb sub-subfamily. As to quaternary structure, monomer (Jararhagin and Jararhagin-C) and dimer (Jaracetin). The cofactor is Zn(2+). In terms of processing, the N-terminus of Jararhagin is blocked. As to expression, expressed by the venom gland.

It is found in the secreted. The catalysed reaction is Cleavage of 10-His-|-Leu-11, 14-Ala-|-Leu-15, 16-Tyr-|-Leu-17 and 24-Phe-|-Phe-25 bonds in insulin B chain.. With respect to regulation, inhibited by EDTA, 1,10 phenanthroline and batimastat (a peptidomimetic MMP inhibitor). Its function is as follows. Snake venom zinc metalloproteinase-disintegrin-like jararhagin: causes hemorrhage. This is the result of the degradation of sub-endothelial matrix proteins leading to the disruption of the blood vessel endothelium, with accompanying disturbances in platelet function. It is able to degrade von Willebrand factor (vWF) and it hydrolyzes the alpha-chain of fibrinogen (FGA) while leaving the beta and gamma chains unaffected. It inhibits collagen-induced platelet aggregation through the binding to alpha-2/beta-1 integrin (ITGA2/ITGB1) (collagen receptor), and it cleaves the beta-1 subunit of the same integrin, inhibiting platelet interaction and ultimately causing impairment of signal transduction. It has inability to be affected by the plasma inhibitor alpha(2)-macroglobulin. In fibroblasts, it functions as a collagen-mimetic substrate and, in endothelial cells, it causes apoptosis and indirectly inhibits cell proliferation by release of angiostatin-like compounds. It induces a strong pro-inflammatory response characterized by intense leukocyte accumulation and release of cytokines at the site of the injection. Although hemorrhage and edema are a response to the direct effect of this toxin, jararhagin-induced inflammation and necrosis are dependent on macrophages and key pro-inflammatory cytokines or their receptors. It also possesses anti-tumorgenic properties. The monomeric form inhibits collagen- and ADP-induced platelet aggregation, but has no effect on glycoprotein Ib-IX-dependent (GP1BA/GP5/GP9) platelet agglutination. Locally activates the early events of an acute inflammatory response as leukocyte rolling and pro-inflammatory cytokine release. In terms of biological role, the dimeric form jaracetin may be a dimeric form of jararhagin-C. It binds to von Willebrand factor (VWF) and induces its interaction with GPIbalpha (GP1BA) (via the vWF A1 domain), resulting in platelet aggregation. Also binds the alpha-2 subunit of the alpha-2/beta-1 (ITGA2/ITGB1) integrin. It potently induces platelet aggregation in citrated platelet-rich plasma. This chain is Zinc metalloproteinase-disintegrin-like jararhagin, found in Bothrops jararaca (Jararaca).